A 246-amino-acid chain; its full sequence is Probable septum site-determining protein MinC (246 aa).

This sequence belongs to the MinC family. In terms of assembly, interacts with MinD and FtsZ.

Its function is as follows. Cell division inhibitor that blocks the formation of polar Z ring septums. Rapidly oscillates between the poles of the cell to destabilize FtsZ filaments that have formed before they mature into polar Z rings. Prevents FtsZ polymerization. The sequence is that of Probable septum site-determining protein MinC from Pseudomonas savastanoi pv. phaseolicola (strain 1448A / Race 6) (Pseudomonas syringae pv. phaseolicola (strain 1448A / Race 6)).